We begin with the raw amino-acid sequence, 501 residues long: Cytochrome P450 2S1 (501 aa).

Residue C441 participates in heme binding.

This sequence belongs to the cytochrome P450 family. Heme serves as cofactor.

The protein resides in the endoplasmic reticulum membrane. The protein localises to the microsome membrane. It catalyses the reaction all-trans-retinoate + reduced [NADPH--hemoprotein reductase] + O2 = all-trans-5,6-epoxyretinoate + oxidized [NADPH--hemoprotein reductase] + H2O + H(+). The catalysed reaction is all-trans-retinoate + reduced [NADPH--hemoprotein reductase] + O2 = all-trans-4-hydroxyretinoate + oxidized [NADPH--hemoprotein reductase] + H2O + H(+). The enzyme catalyses (5S)-hydroperoxy-(6E,8Z,11Z,14Z)-eicosatetraenoate = 5-oxo-(6E,8Z,11Z,14Z)-eicosatetraenoate + H2O. It carries out the reaction (12S)-hydroperoxy-(5Z,8Z,10E,14Z)-eicosatetraenoate = 12-oxo-(5Z,8Z,10E,14Z)-eicosatetraenoate + H2O. It catalyses the reaction (15S)-hydroperoxy-(5Z,8Z,11Z,13E)-eicosatetraenoate = 15-oxo-(5Z,8Z,11Z,13E)-eicosatetraenoate + H2O. The catalysed reaction is prostaglandin H2 = thromboxane A2. The enzyme catalyses prostaglandin H2 = (12S)-hydroxy-(5Z,8E,10E)-heptadecatrienoate + malonaldehyde. It carries out the reaction (13S)-hydroperoxy-(9Z,11E)-octadecadienoate = 13-oxo-(9Z,11E)-octadecadienoate + H2O. It participates in lipid metabolism; fatty acid metabolism. Functionally, a cytochrome P450 monooxygenase involved in the metabolism of retinoids and eicosanoids. In epidermis, may contribute to the oxidative metabolism of all-trans-retinoic acid. For this activity, uses molecular oxygen inserting one oxygen atom into a substrate, and reducing the second into a water molecule, with two electrons provided by NADPH via cytochrome P450 reductase (NADPH--hemoprotein reductase). Additionally, displays peroxidase and isomerase activities toward various oxygenated eicosanoids such as prostaglandin H2 (PGH2) and hydroperoxyeicosatetraenoates (HPETEs). Independently of cytochrome P450 reductase, NADPH, and O2, catalyzes the breakdown of PGH2 to hydroxyheptadecatrienoic acid (HHT) and malondialdehyde (MDA), which is known to act as a mediator of DNA damage. This Mus musculus (Mouse) protein is Cytochrome P450 2S1 (Cyp2s1).